The chain runs to 616 residues: Zinc metalloproteinase-disintegrin-like ecarin (616 aa).

A signal peptide spans 1-20 (MIQILLVIICLAVFPYQGCS). The propeptide occupies 21 to 190 (IILGSGNVND…EPIKKTLGLI (170 aa)). In terms of domain architecture, Peptidase M12B spans 201–397 (KFIELVVVVD…YNPKCILDPP (197 aa)). Residue Glu204 coordinates Ca(2+). Asn219 and Asn261 each carry an N-linked (GlcNAc...) asparagine glycan. Ca(2+) is bound at residue Asp288. 2 N-linked (GlcNAc...) asparagine glycosylation sites follow: Asn295 and Asn326. Intrachain disulfides connect Cys312–Cys392, Cys352–Cys376, and Cys354–Cys359. Residue His337 coordinates Zn(2+). The active site involves Glu338. Positions 341 and 347 each coordinate Zn(2+). Positions 392, 407, 410, 412, 414, 417, and 420 each coordinate Ca(2+). The Disintegrin domain occupies 405–491 (PAVCGNEIWE…ECPRNEFQRN (87 aa)). Cystine bridges form between Cys408/Cys437, Cys419/Cys432, Cys421/Cys427, Cys431/Cys454, Cys445/Cys451, Cys450/Cys476, Cys463/Cys483, Cys470/Cys502, Cys495/Cys507, Cys514/Cys567, Cys529/Cys578, Cys542/Cys555, Cys562/Cys604, and Cys598/Cys609. The D/ECD-tripeptide signature appears at 469–471 (DCD). Ca(2+)-binding residues include Asp471, Val472, and Asn486. N-linked (GlcNAc...) asparagine glycosylation is present at Asn497.

It belongs to the venom metalloproteinase (M12B) family. P-III subfamily. P-IIIa sub-subfamily. In terms of assembly, monomer. Requires Zn(2+) as cofactor. Expressed by the venom gland.

The protein localises to the secreted. Snake venom zinc metalloproteinase that catalyzes the conversion of prothrombin (F2) to alpha-thrombin through formation of a thrombin intermediate, thereby functioning as a procoagulant protein. Has a low Km for prothrombin and a high kcat. Cleaves the 320-Arg-Ile-321 bond in prothrombin and produces meizothrombin which is ultimately converted to alpha-thrombin by autolysis. The sequence is that of Zinc metalloproteinase-disintegrin-like ecarin from Echis carinatus (Saw-scaled viper).